We begin with the raw amino-acid sequence, 876 residues long: Leucine--tRNA ligase (876 aa).

A 'HIGH' region motif is present at residues 42–52 (PYPSGKLHMGH). The 'KMSKS' region signature appears at 634–638 (KMSKS). Lysine 637 contacts ATP.

The protein belongs to the class-I aminoacyl-tRNA synthetase family.

Its subcellular location is the cytoplasm. The enzyme catalyses tRNA(Leu) + L-leucine + ATP = L-leucyl-tRNA(Leu) + AMP + diphosphate. The sequence is that of Leucine--tRNA ligase from Neisseria gonorrhoeae (strain ATCC 700825 / FA 1090).